The following is a 472-amino-acid chain: Squamosa promoter-binding-like protein 18 (472 aa).

The segment at 89–110 (AKVPPSTSTLKRPRGGGGGGGG) is disordered. The SBP-type zinc finger occupies 112-189 (CPSCAVDGCK…DGHNRRRRKP (78 aa)). Zn(2+)-binding residues include C115, C120, C137, H140, C156, C159, H163, and C175. The Bipartite nuclear localization signal signature appears at 172 to 188 (KRSCRKRLDGHNRRRRK). Disordered stretches follow at residues 179–218 (LDGHNRRRRKPQADSMSSGSFMTSQQGTRFASFTPPRPEP), 233–261 (SHHHHPHPVMTSRQPHFVGSPSSATTAAF), and 358–381 (SVDVSRMVQPSPAAAAGAEHHHHH). Residues 192-209 (DSMSSGSFMTSQQGTRFA) are compositionally biased toward polar residues. Residues 252–261 (SPSSATTAAF) show a composition bias toward low complexity.

Expressed in young panicles.

Its subcellular location is the nucleus. In terms of biological role, trans-acting factor that binds specifically to the consensus nucleotide sequence 5'-TNCGTACAA-3'. May be involved in panicle development. This chain is Squamosa promoter-binding-like protein 18 (SPL18), found in Oryza sativa subsp. japonica (Rice).